The sequence spans 180 residues: Large ribosomal subunit protein uL5 (180 aa).

The protein belongs to the universal ribosomal protein uL5 family. As to quaternary structure, part of the 50S ribosomal subunit; part of the 5S rRNA/L5/L18/L25 subcomplex. Contacts the 5S rRNA and the P site tRNA. Forms a bridge to the 30S subunit in the 70S ribosome.

This is one of the proteins that bind and probably mediate the attachment of the 5S RNA into the large ribosomal subunit, where it forms part of the central protuberance. In the 70S ribosome it contacts protein S13 of the 30S subunit (bridge B1b), connecting the 2 subunits; this bridge is implicated in subunit movement. Contacts the P site tRNA; the 5S rRNA and some of its associated proteins might help stabilize positioning of ribosome-bound tRNAs. In Limosilactobacillus reuteri (strain DSM 20016) (Lactobacillus reuteri), this protein is Large ribosomal subunit protein uL5.